A 481-amino-acid polypeptide reads, in one-letter code: Proline--tRNA ligase (481 aa).

The protein belongs to the class-II aminoacyl-tRNA synthetase family. ProS type 3 subfamily. As to quaternary structure, homodimer.

The protein resides in the cytoplasm. The enzyme catalyses tRNA(Pro) + L-proline + ATP = L-prolyl-tRNA(Pro) + AMP + diphosphate. Catalyzes the attachment of proline to tRNA(Pro) in a two-step reaction: proline is first activated by ATP to form Pro-AMP and then transferred to the acceptor end of tRNA(Pro). The polypeptide is Proline--tRNA ligase (Chlorobium luteolum (strain DSM 273 / BCRC 81028 / 2530) (Pelodictyon luteolum)).